The primary structure comprises 361 residues: Mitogen-activated protein kinase 14A (361 aa).

A Protein kinase domain is found at 25–309 (YQNLSPVGSG…AAEALAHPYF (285 aa)). ATP contacts are provided by residues 31–39 (VGSGAYGTV) and K54. The Proton acceptor role is filled by D151. The residue at position 181 (T181) is a Phosphothreonine; by MAP2K6. The TXY signature appears at 181 to 183 (TGY). Y183 carries the phosphotyrosine; by MAP2K6 modification.

This sequence belongs to the protein kinase superfamily. CMGC Ser/Thr protein kinase family. MAP kinase subfamily. Mg(2+) serves as cofactor. Post-translationally, dually phosphorylated on Thr-181 and Tyr-183, which activates the enzyme. In terms of tissue distribution, exclusively expressed in the ovary.

The protein resides in the cytoplasm. The protein localises to the nucleus. The enzyme catalyses L-seryl-[protein] + ATP = O-phospho-L-seryl-[protein] + ADP + H(+). It catalyses the reaction L-threonyl-[protein] + ATP = O-phospho-L-threonyl-[protein] + ADP + H(+). With respect to regulation, activated by threonine and tyrosine phosphorylation by the dual specificity kinase, MKK6. Functionally, serine/threonine kinase which acts as an essential component of the MAP kinase signal transduction pathway. Mapk14a is one of the four p38 MAPKs which play an important role in the cascades of cellular responses evoked by extracellular stimuli such as pro-inflammatory cytokines or physical stress leading to direct activation of transcription factors. Accordingly, p38 MAPKs phosphorylate a broad range of proteins and it has been estimated that they may have approximately 200 to 300 substrates each. Some of the targets are downstream kinases which are activated through phosphorylation and further phosphorylate additional targets. The polypeptide is Mitogen-activated protein kinase 14A (mapk14a) (Cyprinus carpio (Common carp)).